We begin with the raw amino-acid sequence, 238 residues long: Purine nucleoside phosphorylase DeoD-type (238 aa).

Histidine 5 serves as a coordination point for a purine D-ribonucleoside. Phosphate-binding positions include glycine 21, arginine 25, arginine 44, and arginine 88 to threonine 91. A purine D-ribonucleoside-binding positions include aspartate 180–glutamate 182 and serine 204–aspartate 205. Catalysis depends on aspartate 205, which acts as the Proton donor.

The protein belongs to the PNP/UDP phosphorylase family. As to quaternary structure, homohexamer; trimer of homodimers.

The catalysed reaction is a purine D-ribonucleoside + phosphate = a purine nucleobase + alpha-D-ribose 1-phosphate. It catalyses the reaction a purine 2'-deoxy-D-ribonucleoside + phosphate = a purine nucleobase + 2-deoxy-alpha-D-ribose 1-phosphate. Its function is as follows. Catalyzes the reversible phosphorolytic breakdown of the N-glycosidic bond in the beta-(deoxy)ribonucleoside molecules, with the formation of the corresponding free purine bases and pentose-1-phosphate. The protein is Purine nucleoside phosphorylase DeoD-type of Buchnera aphidicola subsp. Baizongia pistaciae (strain Bp).